We begin with the raw amino-acid sequence, 455 residues long: UDP-N-acetylmuramoylalanine--D-glutamate ligase (455 aa).

Residue 117–123 (GTNGKTT) coordinates ATP.

Belongs to the MurCDEF family.

Its subcellular location is the cytoplasm. The catalysed reaction is UDP-N-acetyl-alpha-D-muramoyl-L-alanine + D-glutamate + ATP = UDP-N-acetyl-alpha-D-muramoyl-L-alanyl-D-glutamate + ADP + phosphate + H(+). The protein operates within cell wall biogenesis; peptidoglycan biosynthesis. In terms of biological role, cell wall formation. Catalyzes the addition of glutamate to the nucleotide precursor UDP-N-acetylmuramoyl-L-alanine (UMA). This chain is UDP-N-acetylmuramoylalanine--D-glutamate ligase, found in Pelotomaculum thermopropionicum (strain DSM 13744 / JCM 10971 / SI).